The following is a 110-amino-acid chain: Nucleoid-associated protein PsycPRwf_1729 (110 aa).

The protein belongs to the YbaB/EbfC family. Homodimer.

The protein resides in the cytoplasm. It localises to the nucleoid. Binds to DNA and alters its conformation. May be involved in regulation of gene expression, nucleoid organization and DNA protection. This chain is Nucleoid-associated protein PsycPRwf_1729, found in Psychrobacter sp. (strain PRwf-1).